Reading from the N-terminus, the 150-residue chain is Probable host range protein 2 (150 aa).

This sequence belongs to the orthopoxvirus OPG027 family.

Inhibits antiviral activity induced by type I interferons. Does not block signal transduction of IFN, but is important to counteract the host antiviral state induced by a pre-treatment with IFN. The chain is Probable host range protein 2 (OPG027) from Camelpox virus (strain M-96).